Here is a 1097-residue protein sequence, read N- to C-terminus: Nitric oxide synthase-like protein (1097 aa).

Cysteine 77 contributes to the heme b binding site. Residues glutamine 140, tryptophan 249, tyrosine 250, glutamate 254, and asparagine 259 each coordinate L-arginine. Tryptophan 340 and phenylalanine 353 together coordinate (6R)-L-erythro-5,6,7,8-tetrahydrobiopterin. Residue tyrosine 368 participates in heme b binding. The tract at residues 387-410 (KRPINRKFHFKQIARAVKFTSKLF) is calmodulin-binding. The Flavodoxin-like domain maps to 420 to 615 (ATVLYATETG…AFRKWASSVF (196 aa)). Residues 426–430 (TETGK) and 561–592 (VFAL…ERIH) contribute to the FMN site. The region spanning 669–914 (KQFVSCTVKA…IRSAPNFHLP (246 aa)) is the FAD-binding FR-type domain. FAD is bound by residues 704–715 (YNPGDHVGIIAC) and 847–857 (LQPRFYSISSS). Residues 922 to 940 (ILIG…WHHR) and 1019 to 1034 (GAHF…AEDV) contribute to the NADP(+) site.

Belongs to the NOS family. Heme b is required as a cofactor. It depends on FAD as a cofactor. Requires FMN as cofactor.

The catalysed reaction is 2 L-arginine + 3 NADPH + 4 O2 + H(+) = 2 L-citrulline + 2 nitric oxide + 3 NADP(+) + 4 H2O. Its function is as follows. Produces nitric oxide (NO) which is a messenger molecule with diverse functions throughout the body. This Bombyx mori (Silk moth) protein is Nitric oxide synthase-like protein.